The following is a 1174-amino-acid chain: Lysylphosphatidylglycerol biosynthesis bifunctional protein LysX (1174 aa).

The phosphatidylglycerol lysyltransferase stretch occupies residues 1–665 (MGVGLHLTVP…LLHHDGSAPD (665 aa)). Residues 9 to 36 (VPGLRRDGRGVQSNSHDTSSKTTADISR) form a disordered region. Polar residues predominate over residues 19 to 33 (VQSNSHDTSSKTTAD). 7 helical membrane passes run 82–102 (VPAAAGWTVGVIATLSLLASV), 124–144 (FPDTNFAWSFVLALLAAALTA), 148–168 (IAWLVLLANMVLAAVVNAAEI), 179–199 (FGENLGFAVHVVAIVVLVLGY), 216–236 (AVWLAGAVVGIVASWGLVELF), 274–294 (AIFGLFGAFALIGAAIVLFLS), and 614–634 (VIPRVGVASVIAEGFLVLPFS). Residues 666–1174 (VSGLRQVGLT…TLPFPLAKPH (509 aa)) are lysine--tRNA ligase. Positions 728-806 (VSVSGRIMRI…SLIVSGWRLI (79 aa)) form a DNA-binding region, OB. Positions 1086 and 1093 each coordinate Mg(2+).

The protein in the N-terminal section; belongs to the LPG synthetase family. This sequence in the C-terminal section; belongs to the class-II aminoacyl-tRNA synthetase family. It depends on Mg(2+) as a cofactor.

It localises to the cell membrane. It catalyses the reaction tRNA(Lys) + L-lysine + ATP = L-lysyl-tRNA(Lys) + AMP + diphosphate. It carries out the reaction L-lysyl-tRNA(Lys) + a 1,2-diacyl-sn-glycero-3-phospho-(1'-sn-glycerol) = a 1,2-diacyl-sn-glycero-3-phospho-1'-(3'-O-L-lysyl)-sn-glycerol + tRNA(Lys). Its function is as follows. Catalyzes the production of L-lysyl-tRNA(Lys)transfer and the transfer of a lysyl group from L-lysyl-tRNA(Lys) to membrane-bound phosphatidylglycerol (PG), which produces lysylphosphatidylglycerol (LPG), one of the components of the bacterial membrane with a positive net charge. LPG synthesis contributes to the resistance to cationic antimicrobial peptides (CAMPs) and likely protects M.tuberculosis against the CAMPs produced by competiting microorganisms (bacteriocins). In fact, the modification of anionic phosphatidylglycerol with positively charged L-lysine results in repulsion of the peptides. In Mycobacterium tuberculosis (strain KZN 1435 / MDR), this protein is Lysylphosphatidylglycerol biosynthesis bifunctional protein LysX (lysX).